Reading from the N-terminus, the 759-residue chain is Protein YdeP (759 aa).

[4Fe-4S] cluster is bound by residues Cys-49 and Cys-52.

It belongs to the prokaryotic molybdopterin-containing oxidoreductase family. [4Fe-4S] cluster serves as cofactor. Requires Mo-bis(molybdopterin guanine dinucleotide) as cofactor.

Its function is as follows. Probably involved in acid resistance. This is Protein YdeP (ydeP) from Escherichia coli O6:H1 (strain CFT073 / ATCC 700928 / UPEC).